We begin with the raw amino-acid sequence, 222 residues long: METIDAEDAACLRRIALLGGCKGPVRLSTQALGDQLGISQQTASRRLQSLEKAQMISRTAESTGQYVLVTRSGEEHLRREFAEYAKIFDVKDEQYVLTGTVMSGVGEGRYYMSIPHYQEQFEKLCGFTPYPGTLNIKLNPQSVLIRKRMDSLEWTIVPGFKDEHRMFGEARCIKCTISGIPCAIVVPGRTHHPEEVIEVISGTQLRDALDLTENSEVVVVIG.

The interval 1-94 is H-T-H motif-like; it reads METIDAEDAA…AKIFDVKDEQ (94 aa). Positions 95–222 are riboflavin kinase; the sequence is YVLTGTVMSG…ENSEVVVVIG (128 aa). 104 to 109 lines the CDP pocket; the sequence is GVGEGR. Mg(2+) contacts are provided by Thr-133 and Asn-135. FMN is bound by residues Thr-190 and Glu-198. 203–206 is a binding site for CDP; the sequence is TQLR.

This sequence belongs to the archaeal riboflavin kinase family. Requires Mg(2+) as cofactor.

The catalysed reaction is riboflavin + CTP = CDP + FMN + H(+). It functions in the pathway cofactor biosynthesis; FMN biosynthesis; FMN from riboflavin (CTP route): step 1/1. Its function is as follows. Catalyzes the CTP-dependent phosphorylation of riboflavin (vitamin B2) to form flavin mononucleotide (FMN). The chain is Riboflavin kinase (ribK) from Methanocorpusculum labreanum (strain ATCC 43576 / DSM 4855 / Z).